Reading from the N-terminus, the 98-residue chain is NADH-ubiquinone oxidoreductase chain 4L (98 aa).

The next 3 membrane-spanning stretches (helical) occupy residues 1–21 (MTMV…GLLM), 29–49 (SLLC…VTIL), and 61–81 (IILL…LVMV).

Belongs to the complex I subunit 4L family. In terms of assembly, core subunit of respiratory chain NADH dehydrogenase (Complex I) which is composed of 45 different subunits.

Its subcellular location is the mitochondrion inner membrane. The catalysed reaction is a ubiquinone + NADH + 5 H(+)(in) = a ubiquinol + NAD(+) + 4 H(+)(out). Its function is as follows. Core subunit of the mitochondrial membrane respiratory chain NADH dehydrogenase (Complex I) which catalyzes electron transfer from NADH through the respiratory chain, using ubiquinone as an electron acceptor. Part of the enzyme membrane arm which is embedded in the lipid bilayer and involved in proton translocation. This Leptonychotes weddellii (Weddell seal) protein is NADH-ubiquinone oxidoreductase chain 4L (MT-ND4L).